A 711-amino-acid polypeptide reads, in one-letter code: Catalase HPII (711 aa).

Basic and acidic residues predominate over residues 1–10 (MPSKKTDAPK). Residues 1–27 (MPSKKTDAPKQSEAAGTQTPDRANTNA) form a disordered region. Residues 14-27 (AAGTQTPDRANTNA) are compositionally biased toward polar residues. Catalysis depends on residues His-92 and Asn-165. Tyr-379 lines the heme pocket.

The protein belongs to the catalase family. HPII subfamily. The cofactor is heme.

Its subcellular location is the cytoplasm. The catalysed reaction is 2 H2O2 = O2 + 2 H2O. Functionally, decomposes hydrogen peroxide into water and oxygen; serves to protect cells from the toxic effects of hydrogen peroxide. This chain is Catalase HPII (katE), found in Pseudomonas putida (Arthrobacter siderocapsulatus).